The primary structure comprises 150 residues: Large ribosomal subunit protein bL9 (150 aa).

It belongs to the bacterial ribosomal protein bL9 family.

In terms of biological role, binds to the 23S rRNA. In Hydrogenovibrio crunogenus (strain DSM 25203 / XCL-2) (Thiomicrospira crunogena), this protein is Large ribosomal subunit protein bL9.